Consider the following 302-residue polypeptide: CRISPR-associated endonuclease Cas1 1 (302 aa).

Positions 159, 219, and 234 each coordinate Mn(2+).

It belongs to the CRISPR-associated endonuclease Cas1 family. Homodimer, forms a heterotetramer with a Cas2 homodimer. The cofactor is Mg(2+). Mn(2+) is required as a cofactor.

Functionally, CRISPR (clustered regularly interspaced short palindromic repeat), is an adaptive immune system that provides protection against mobile genetic elements (viruses, transposable elements and conjugative plasmids). CRISPR clusters contain spacers, sequences complementary to antecedent mobile elements, and target invading nucleic acids. CRISPR clusters are transcribed and processed into CRISPR RNA (crRNA). Acts as a dsDNA endonuclease. Involved in the integration of spacer DNA into the CRISPR cassette. This Pyrobaculum aerophilum (strain ATCC 51768 / DSM 7523 / JCM 9630 / CIP 104966 / NBRC 100827 / IM2) protein is CRISPR-associated endonuclease Cas1 1.